The sequence spans 293 residues: Ribosomal protein L11 methyltransferase (293 aa).

S-adenosyl-L-methionine contacts are provided by threonine 145, glycine 166, aspartate 188, and asparagine 230.

The protein belongs to the methyltransferase superfamily. PrmA family.

The protein localises to the cytoplasm. The catalysed reaction is L-lysyl-[protein] + 3 S-adenosyl-L-methionine = N(6),N(6),N(6)-trimethyl-L-lysyl-[protein] + 3 S-adenosyl-L-homocysteine + 3 H(+). Functionally, methylates ribosomal protein L11. The chain is Ribosomal protein L11 methyltransferase from Shigella sonnei (strain Ss046).